A 352-amino-acid polypeptide reads, in one-letter code: Aliphatic aldoxime dehydratase (352 aa).

Ser219 provides a ligand contact to an aliphatic aldoxime. His299 lines the heme b pocket. Position 320 (His320) interacts with an aliphatic aldoxime. His320 is a catalytic residue.

It belongs to the heme-containing dehydratase family. In terms of assembly, homodimer. Requires heme b as cofactor. Ca(2+) serves as cofactor.

The catalysed reaction is an aliphatic aldoxime = a nitrile + H2O. Active when the heme iron is in the ferrous state. Is very sensitive to AgNO(3), is also inhibited by hydroxylamine and phenylhydrazine, and hardly inhibited by thiol reagents. Not sensitive to chelating agents and serine-modifying reagents. In terms of biological role, catalyzes the dehydration of aldoximes to their corresponding nitrile. Aliphatic aldoximes are more effective substrates than aromatic aldoximes. Shows high activity with butyraldoxime and acetaldoxime, but only weak activity with the aromatic aldoxime pyridine-2-aldoxime. Cannot use benzaldoxime, isonitrosoacetophenone and pyridine-4-aldoxime. Is involved in the metabolism of aldoxime in vivo. The chain is Aliphatic aldoxime dehydratase from Pseudomonas chlororaphis (Pseudomonas aureofaciens).